Consider the following 50-residue polypeptide: Inducible serine protease inhibitor 1 (50 aa).

The disordered stretch occupies residues 1–27 (DLVXGTNFXKNNPXSTRVAANSXRSPS). Positions 8-25 (FXKNNPXSTRVAANSXRS) are enriched in polar residues.

Its function is as follows. Inhibits trypsin and the toxin protease PR2 of M.anisopliae. Does not inhibit chymotrypsin, subtilisin Carlsberg, proteinase K, porcine pancreatic elastase and the toxin protease PR1 of M.anisopliae. This chain is Inducible serine protease inhibitor 1, found in Galleria mellonella (Greater wax moth).